Consider the following 192-residue polypeptide: Probable cobalt-precorrin-6B C(15)-methyltransferase (decarboxylating) (192 aa).

Residues Thr20, 44–48 (GSGTG), Glu68, and Ala96 each bind S-adenosyl-L-methionine.

This sequence belongs to the methyltransferase superfamily. Archaeal-type CbiT family.

It carries out the reaction Co-precorrin-6B + S-adenosyl-L-methionine = Co-precorrin-7 + S-adenosyl-L-homocysteine + CO2. The protein operates within cofactor biosynthesis; adenosylcobalamin biosynthesis; cob(II)yrinate a,c-diamide from sirohydrochlorin (anaerobic route): step 8/10. In terms of biological role, catalyzes the methylation of C-15 in cobalt-precorrin-6B followed by the decarboxylation of C-12 to form cobalt-precorrin-7. This chain is Probable cobalt-precorrin-6B C(15)-methyltransferase (decarboxylating), found in Sulfolobus acidocaldarius (strain ATCC 33909 / DSM 639 / JCM 8929 / NBRC 15157 / NCIMB 11770).